The chain runs to 38 residues: Esterase-5 (38 aa).

Residues 1–38 (SAAADPLIVELPNGKVRGRDNEGYYEAEGIPRAEPPVG) are disordered.

It belongs to the type-B carboxylesterase/lipase family.

The enzyme catalyses a carboxylic ester + H2O = an alcohol + a carboxylate + H(+). The polypeptide is Esterase-5 (Est-5) (Drosophila mojavensis (Fruit fly)).